The chain runs to 247 residues: 1-(5-phosphoribosyl)-5-[(5-phosphoribosylamino)methylideneamino] imidazole-4-carboxamide isomerase (247 aa).

The active-site Proton acceptor is aspartate 8. Aspartate 129 serves as the catalytic Proton donor.

It belongs to the HisA/HisF family.

It is found in the cytoplasm. The catalysed reaction is 1-(5-phospho-beta-D-ribosyl)-5-[(5-phospho-beta-D-ribosylamino)methylideneamino]imidazole-4-carboxamide = 5-[(5-phospho-1-deoxy-D-ribulos-1-ylimino)methylamino]-1-(5-phospho-beta-D-ribosyl)imidazole-4-carboxamide. It functions in the pathway amino-acid biosynthesis; L-histidine biosynthesis; L-histidine from 5-phospho-alpha-D-ribose 1-diphosphate: step 4/9. The sequence is that of 1-(5-phosphoribosyl)-5-[(5-phosphoribosylamino)methylideneamino] imidazole-4-carboxamide isomerase from Solidesulfovibrio magneticus (strain ATCC 700980 / DSM 13731 / RS-1) (Desulfovibrio magneticus).